Consider the following 50-residue polypeptide: METTNFGFVASLLFVGIPTIFLIGLFISTQDGEKSSFYSDSSKGKLGPKR.

Residues 7-27 (GFVASLLFVGIPTIFLIGLFI) traverse the membrane as a helical segment.

Belongs to the PsbM family. As to quaternary structure, PSII is composed of 1 copy each of membrane proteins PsbA, PsbB, PsbC, PsbD, PsbE, PsbF, PsbH, PsbI, PsbJ, PsbK, PsbL, PsbM, PsbT, PsbX, PsbY, Psb30/Ycf12, peripheral proteins PsbO, CyanoQ (PsbQ), PsbU, PsbV and a large number of cofactors. It forms dimeric complexes.

The protein localises to the cellular thylakoid membrane. In terms of biological role, one of the components of the core complex of photosystem II (PSII). PSII is a light-driven water:plastoquinone oxidoreductase that uses light energy to abstract electrons from H(2)O, generating O(2) and a proton gradient subsequently used for ATP formation. It consists of a core antenna complex that captures photons, and an electron transfer chain that converts photonic excitation into a charge separation. This subunit is found at the monomer-monomer interface. The protein is Photosystem II reaction center protein M of Prochlorococcus marinus subsp. pastoris (strain CCMP1986 / NIES-2087 / MED4).